Consider the following 464-residue polypeptide: Protein FAM90A26 (464 aa).

Disordered regions lie at residues 1–42 (MMAC…DPRL), 70–293 (PPTL…AKRP), 312–390 (PFQI…DGAQ), and 410–442 (AAPS…VRVP). Composition is skewed to basic and acidic residues over residues 74 to 83 (GKKEGKENLK) and 97 to 114 (NKDK…DPQR). The span at 178-197 (SALASLSPLRKASLSSSSSL) shows a compositional bias: low complexity.

This sequence belongs to the FAM90 family.

In Homo sapiens (Human), this protein is Protein FAM90A26.